A 330-amino-acid polypeptide reads, in one-letter code: Aspartate--ammonia ligase (330 aa).

The protein belongs to the class-II aminoacyl-tRNA synthetase family. AsnA subfamily.

Its subcellular location is the cytoplasm. It catalyses the reaction L-aspartate + NH4(+) + ATP = L-asparagine + AMP + diphosphate + H(+). Its pathway is amino-acid biosynthesis; L-asparagine biosynthesis; L-asparagine from L-aspartate (ammonia route): step 1/1. This Escherichia coli O139:H28 (strain E24377A / ETEC) protein is Aspartate--ammonia ligase.